A 610-amino-acid chain; its full sequence is UvrABC system protein C (610 aa).

The GIY-YIG domain maps to 16 to 94 (SQPGVYRMYD…IKLYQPRYNV (79 aa)). A UVR domain is found at 204 to 239 (DQVLTQLIARMEKASQDLAFEEAARIRDQIQAVRRV).

This sequence belongs to the UvrC family. Interacts with UvrB in an incision complex.

The protein localises to the cytoplasm. The UvrABC repair system catalyzes the recognition and processing of DNA lesions. UvrC both incises the 5' and 3' sides of the lesion. The N-terminal half is responsible for the 3' incision and the C-terminal half is responsible for the 5' incision. In Salmonella gallinarum (strain 287/91 / NCTC 13346), this protein is UvrABC system protein C.